A 204-amino-acid polypeptide reads, in one-letter code: Outer-membrane lipoprotein LolB (204 aa).

An N-terminal signal peptide occupies residues 1–16 (MLRHLLVFSLIALLAG). Cys17 is lipidated: N-palmitoyl cysteine. The S-diacylglycerol cysteine moiety is linked to residue Cys17.

Belongs to the LolB family. As to quaternary structure, monomer.

The protein localises to the cell outer membrane. Functionally, plays a critical role in the incorporation of lipoproteins in the outer membrane after they are released by the LolA protein. The polypeptide is Outer-membrane lipoprotein LolB (Ectopseudomonas mendocina (strain ymp) (Pseudomonas mendocina)).